A 354-amino-acid chain; its full sequence is Uroporphyrinogen decarboxylase (354 aa).

Residues 27 to 31, Asp-77, Tyr-154, Thr-209, and His-327 contribute to the substrate site; that span reads RQAGR.

Belongs to the uroporphyrinogen decarboxylase family. Homodimer.

Its subcellular location is the cytoplasm. The enzyme catalyses uroporphyrinogen III + 4 H(+) = coproporphyrinogen III + 4 CO2. It participates in porphyrin-containing compound metabolism; protoporphyrin-IX biosynthesis; coproporphyrinogen-III from 5-aminolevulinate: step 4/4. In terms of biological role, catalyzes the decarboxylation of four acetate groups of uroporphyrinogen-III to yield coproporphyrinogen-III. The polypeptide is Uroporphyrinogen decarboxylase (Histophilus somni (strain 2336) (Haemophilus somnus)).